The chain runs to 286 residues: Probable aquaporin PIP-type pTOM75 (286 aa).

Positions 1–35 (MAENKEEDVKLGANKFRETQPLGTAAQTDKDYKEP) are disordered. Over 1–55 (MAENKEEDVKLGANKFRETQPLGTAAQTDKDYKEPPPAPLFEPGELSSWSFYRAG) the chain is Cytoplasmic. Over residues 7 to 18 (EDVKLGANKFRE) the composition is skewed to basic and acidic residues. A helical membrane pass occupies residues 56–76 (IAEFMATFLFLYITILTVMGL). The Extracellular segment spans residues 77-89 (KRSDSLCSSVGIQ). The chain crosses the membrane as a helical span at residues 90–110 (GVAWAFGGMIFALVYCTAGIS). The Cytoplasmic segment spans residues 111–133 (GGHINPAVTFGLFLARKLSLTRA). Positions 115–117 (NPA) match the NPA 1 motif. The helical transmembrane segment at 134-154 (VFYMVMQCLGAICGAGVVKGF) threads the bilayer. Residues 155–175 (MVGPYQRLGGGANVVNPGYTK) are Extracellular-facing. Residues 176 to 196 (GDGLGAEIIGTFVLVYTVFSA) form a helical membrane-spanning segment. At 197–209 (TDAKRNARDSHVP) the chain is on the cytoplasmic side. The helical transmembrane segment at 210 to 230 (ILAPLPIGFAVFLVHLATIPI) threads the bilayer. Topologically, residues 231 to 257 (TGTGINPARSLGAAIIYNDEHAWNDHW) are extracellular. Positions 236–238 (NPA) match the NPA 2 motif. The chain crosses the membrane as a helical span at residues 258-278 (IFWVGPMIGAALAAIYHQIII). At 279–286 (RAMPFHRS) the chain is on the cytoplasmic side.

The protein belongs to the MIP/aquaporin (TC 1.A.8) family. PIP (TC 1.A.8.11) subfamily. In terms of tissue distribution, roots, ripening fruit and senescing leaves.

The protein resides in the cell membrane. Functionally, aquaporins facilitate the transport of water and small neutral solutes across cell membranes. This is Probable aquaporin PIP-type pTOM75 from Solanum lycopersicum (Tomato).